Here is a 395-residue protein sequence, read N- to C-terminus: Phosphopentomutase (395 aa).

Mn(2+) is bound by residues Asp12, Asp289, His294, Asp330, His331, and His342.

It belongs to the phosphopentomutase family. The cofactor is Mn(2+).

The protein localises to the cytoplasm. It carries out the reaction 2-deoxy-alpha-D-ribose 1-phosphate = 2-deoxy-D-ribose 5-phosphate. The catalysed reaction is alpha-D-ribose 1-phosphate = D-ribose 5-phosphate. It participates in carbohydrate degradation; 2-deoxy-D-ribose 1-phosphate degradation; D-glyceraldehyde 3-phosphate and acetaldehyde from 2-deoxy-alpha-D-ribose 1-phosphate: step 1/2. Functionally, isomerase that catalyzes the conversion of deoxy-ribose 1-phosphate (dRib-1-P) and ribose 1-phosphate (Rib-1-P) to deoxy-ribose 5-phosphate (dRib-5-P) and ribose 5-phosphate (Rib-5-P), respectively. In Levilactobacillus brevis (strain ATCC 367 / BCRC 12310 / CIP 105137 / JCM 1170 / LMG 11437 / NCIMB 947 / NCTC 947) (Lactobacillus brevis), this protein is Phosphopentomutase.